We begin with the raw amino-acid sequence, 366 residues long: Molybdopterin synthase catalytic subunit (366 aa).

Substrate-binding positions include 101 to 102 (HR), Lys-117, and 124 to 126 (KKE).

This sequence belongs to the MoaE family. MOCS2B subfamily. Heterotetramer; composed of 2 small (Mocs2A) and 2 large (Mocs2B) subunits.

Its subcellular location is the cytoplasm. The enzyme catalyses 2 [molybdopterin-synthase sulfur-carrier protein]-C-terminal-Gly-aminoethanethioate + cyclic pyranopterin phosphate + H2O = molybdopterin + 2 [molybdopterin-synthase sulfur-carrier protein]-C-terminal Gly-Gly + 2 H(+). It functions in the pathway cofactor biosynthesis; molybdopterin biosynthesis. Catalytic subunit of the molybdopterin synthase complex, a complex that catalyzes the conversion of precursor Z into molybdopterin. Acts by mediating the incorporation of 2 sulfur atoms from thiocarboxylated Mocs2A into precursor Z to generate a dithiolene group. The sequence is that of Molybdopterin synthase catalytic subunit from Drosophila mojavensis (Fruit fly).